Here is a 351-residue protein sequence, read N- to C-terminus: Photosystem II D2 protein 2 (351 aa).

Residues Cys-39–Thr-59 traverse the membrane as a helical segment. His-116 provides a ligand contact to chlorophyll a. A helical transmembrane segment spans residues Gly-123 to Pro-139. Pheophytin a-binding residues include Gln-128 and Asn-141. A helical membrane pass occupies residues Val-151–Ser-164. His-196 contributes to the chlorophyll a binding site. A helical membrane pass occupies residues Gly-206–Lys-226. The a plastoquinone site is built by His-213 and Phe-260. Position 213 (His-213) interacts with Fe cation. His-267 contacts Fe cation. Residues Gly-277–Arg-293 traverse the membrane as a helical segment.

It belongs to the reaction center PufL/M/PsbA/D family. As to quaternary structure, PSII is composed of 1 copy each of membrane proteins PsbA, PsbB, PsbC, PsbD, PsbE, PsbF, PsbH, PsbI, PsbJ, PsbK, PsbL, PsbM, PsbT, PsbX, PsbY, PsbZ, Psb30/Ycf12, peripheral proteins PsbO, CyanoQ (PsbQ), PsbU, PsbV and a large number of cofactors. It forms dimeric complexes. Requires The D1/D2 heterodimer binds P680, chlorophylls that are the primary electron donor of PSII, and subsequent electron acceptors. It shares a non-heme iron and each subunit binds pheophytin, quinone, additional chlorophylls, carotenoids and lipids. There is also a Cl(-1) ion associated with D1 and D2, which is required for oxygen evolution. The PSII complex binds additional chlorophylls, carotenoids and specific lipids. as cofactor.

It localises to the cellular thylakoid membrane. The catalysed reaction is 2 a plastoquinone + 4 hnu + 2 H2O = 2 a plastoquinol + O2. In terms of biological role, photosystem II (PSII) is a light-driven water:plastoquinone oxidoreductase that uses light energy to abstract electrons from H(2)O, generating O(2) and a proton gradient subsequently used for ATP formation. It consists of a core antenna complex that captures photons, and an electron transfer chain that converts photonic excitation into a charge separation. The D1/D2 (PsbA/PsbD) reaction center heterodimer binds P680, the primary electron donor of PSII as well as several subsequent electron acceptors. D2 is needed for assembly of a stable PSII complex. The chain is Photosystem II D2 protein 2 from Acaryochloris marina (strain MBIC 11017).